A 421-amino-acid polypeptide reads, in one-letter code: FAD-dependent monooxygenase atnJ (421 aa).

The chain crosses the membrane as a helical span at residues 9–29 (LVPLHVVIVGAGIGGLSAAVA). FAD contacts are provided by Glu41 and Ala54. The active site involves Arg188. FAD-binding residues include Asp303 and Val316. The interval 371 to 392 (RDGDAQAARDSQRKATSGTGQN) is disordered.

The protein belongs to the paxM FAD-dependent monooxygenase family. FAD serves as cofactor.

The protein resides in the membrane. The protein operates within secondary metabolite biosynthesis; terpenoid biosynthesis. FAD-dependent monooxygenase; part of the gene cluster that mediates the biosynthesis of the meroterpenoids arthripenoids. The pathway begins with the HR-PKS atnH that catalyzes two chain-extension steps to form a reduced triketide, which then primes the SAT domain in the NR-PKS atnG to initiate three more cycles of extension to give a linear hexaketide corresponding to the polyketide part of arthripenoids. The FAD-dependent monooxygenase atnJ then performs an oxidative decarboxylation at C11 of the atnH/atnG product, via an electrophilic aromatic hydroxylation with concomitant ipso-decarboxylation. The membrane-bound polyprenyl transferase atnF then introduces a farnesyl group before the FAD-dependent monooxygenase atnK functions as the first epoxidase on terminal C12'-C13' olefin, followed by a second epoxidation on C7'-C8' catalyzed by atnA. The terpene cyclase/mutase atnI then initiates the sequential tricyclic ring formation through protonation of the terminal epoxide and catalyzes the regioselective and stereoselective 6/6/6-tricyclic ring formation. The cytochrome P450 monooxygenase atnM is responsible for hydroxylating both C1' and C10'. The next steps may involve ketoreduction and acetyl transfer by the ketoreductase atnB and the acetyltransferase atnC, and lead to the production of arthripenoid B, the final biosynthetic product of the atn cluster. The hydroquinone moiety in arthripenoid B is prone to undergo spontaneous oxidation to afford a benzoquinone compound, a key intermediate for generating structure diversity. For instance, addition of a cysteine followed by ring contraction gives arthripenoid A, tautomerization gives the main product arthripenoid C, addition of a molecular of water or amine affords arthripenoid D or E, respectively, and loss of one water forms arthripenoid F. The polypeptide is FAD-dependent monooxygenase atnJ (Arthrinium sp).